A 635-amino-acid polypeptide reads, in one-letter code: Two-component response regulator ARR18 (635 aa).

Residues 19–133 (RVLAVDDNPT…ELQNIWHHVV (115 aa)) form the Response regulatory domain. Residue Asp70 is modified to 4-aspartylphosphate. Disordered regions lie at residues 144-196 (LPPS…KKPR) and 323-342 (IQQG…GTYH). Acidic residues predominate over residues 166 to 186 (SGDEDDSDREEDDGEGSEQDG). The Nuclear localization signal motif lies at 193–196 (KKPR). A DNA-binding region (myb-like GARP) is located at residues 196 to 246 (RVVWSQELHQKFVSAVQQLGLDKAVPKKILDLMSIEGLTRENVASHLQKYR).

Belongs to the ARR family. Type-B subfamily. Binds the target DNA as a monomer. Post-translationally, two-component system major event consists of a His-to-Asp phosphorelay between a sensor histidine kinase (HK) and a response regulator (RR). In plants, the His-to-Asp phosphorelay involves an additional intermediate named Histidine-containing phosphotransfer protein (HPt). This multistep phosphorelay consists of a His-Asp-His-Asp sequential transfer of a phosphate group between first a His and an Asp of the HK protein, followed by the transfer to a conserved His of the HPt protein and finally the transfer to an Asp in the receiver domain of the RR protein. As to expression, predominantly expressed in young leaf tissue developing anthers, and siliques.

Its subcellular location is the nucleus. Functionally, transcriptional activator that binds specifically to the DNA sequence 5'-[AG]GATT-3'. Functions as a response regulator involved in His-to-Asp phosphorelay signal transduction system. Phosphorylation of the Asp residue in the receiver domain activates the ability of the protein to promote the transcription of target genes. Could directly activate some type-A response regulators in response to cytokinins. In Arabidopsis thaliana (Mouse-ear cress), this protein is Two-component response regulator ARR18 (ARR18).